A 388-amino-acid polypeptide reads, in one-letter code: Succinate--CoA ligase [ADP-forming] subunit beta (388 aa).

Residues 9–244 enclose the ATP-grasp domain; it reads KQLFAEYGLP…PSQDDPREAH (236 aa). Residues Lys-46, 53–55, Glu-99, Thr-102, and Glu-107 contribute to the ATP site; that span reads GRG. Residues Asn-199 and Asp-213 each contribute to the Mg(2+) site. Residues Asn-264 and 321–323 each bind substrate; that span reads GIV.

This sequence belongs to the succinate/malate CoA ligase beta subunit family. In terms of assembly, heterotetramer of two alpha and two beta subunits. It depends on Mg(2+) as a cofactor.

The enzyme catalyses succinate + ATP + CoA = succinyl-CoA + ADP + phosphate. It carries out the reaction GTP + succinate + CoA = succinyl-CoA + GDP + phosphate. The protein operates within carbohydrate metabolism; tricarboxylic acid cycle; succinate from succinyl-CoA (ligase route): step 1/1. In terms of biological role, succinyl-CoA synthetase functions in the citric acid cycle (TCA), coupling the hydrolysis of succinyl-CoA to the synthesis of either ATP or GTP and thus represents the only step of substrate-level phosphorylation in the TCA. The beta subunit provides nucleotide specificity of the enzyme and binds the substrate succinate, while the binding sites for coenzyme A and phosphate are found in the alpha subunit. This is Succinate--CoA ligase [ADP-forming] subunit beta from Pseudomonas syringae pv. tomato (strain ATCC BAA-871 / DC3000).